A 929-amino-acid polypeptide reads, in one-letter code: Bifunctional glutamine synthetase adenylyltransferase/adenylyl-removing enzyme (929 aa).

Positions 1–422 (MTTPISTSRA…TRHFEQIFAV (422 aa)) are adenylyl removase. Residues 429 to 929 (LGTFARIRPE…FQLWEDVFGT (501 aa)) are adenylyl transferase.

Belongs to the GlnE family. The cofactor is Mg(2+).

The catalysed reaction is [glutamine synthetase]-O(4)-(5'-adenylyl)-L-tyrosine + phosphate = [glutamine synthetase]-L-tyrosine + ADP. It carries out the reaction [glutamine synthetase]-L-tyrosine + ATP = [glutamine synthetase]-O(4)-(5'-adenylyl)-L-tyrosine + diphosphate. Involved in the regulation of glutamine synthetase GlnA, a key enzyme in the process to assimilate ammonia. When cellular nitrogen levels are high, the C-terminal adenylyl transferase (AT) inactivates GlnA by covalent transfer of an adenylyl group from ATP to specific tyrosine residue of GlnA, thus reducing its activity. Conversely, when nitrogen levels are low, the N-terminal adenylyl removase (AR) activates GlnA by removing the adenylyl group by phosphorolysis, increasing its activity. The regulatory region of GlnE binds the signal transduction protein PII (GlnB) which indicates the nitrogen status of the cell. This is Bifunctional glutamine synthetase adenylyltransferase/adenylyl-removing enzyme from Nitrosomonas eutropha (strain DSM 101675 / C91 / Nm57).